Consider the following 299-residue polypeptide: Biotin transporter (299 aa).

Transmembrane regions (helical) follow at residues 2 to 22 (ALLIITTILWAFSFSLFGEYL), 26 to 46 (VDSYFAVLIRVGLAALVFLPF), 56 to 76 (TISLYMLVGAMQLGIMYMLSF), 81 to 101 (YLTVSELLLFTVLTPLYITLI), 110 to 130 (LRWGYAFSALLAVIGAGIIRY), 137 to 157 (FWVGLLLVQLSNISFAIGMVG), 172 to 192 (AFAWFYLGAFLVAAVAWSLLG), 202 to 222 (LQWSILVFLGVVASGIGYFMW), 233 to 253 (TLGIMNNMHVPAGLLVNLAIW), and 256 to 276 (QPHWPSFITGAAVILASLWVH). EamA domains are found at residues 3 to 128 (LLII…AGII) and 139 to 274 (VGLL…ASLW).

This sequence belongs to the drug/metabolite transporter (DMT) superfamily. 10 TMS drug/metabolite exporter (DME) (TC 2.A.7.3) family.

Its subcellular location is the cell inner membrane. It catalyses the reaction biotin(in) = biotin(out). Its function is as follows. Uptake of biotin. The protein is Biotin transporter of Salmonella typhi.